We begin with the raw amino-acid sequence, 698 residues long: Serotransferrin (698 aa).

Residues methionine 1–alanine 19 form the signal peptide. Transferrin-like domains follow at residues valine 25–glutamate 347 and valine 361–lysine 683. Intrachain disulfides connect cysteine 28-cysteine 67 and cysteine 38-cysteine 58. Arginine 42 carries the dimethylated arginine modification. Serine 51 is a glycosylation site (O-linked (GalNAc...) serine). 2 residues coordinate Fe(3+): aspartate 82 and tyrosine 114. Cystine bridges form between cysteine 137–cysteine 213, cysteine 156–cysteine 350, cysteine 177–cysteine 193, cysteine 180–cysteine 198, cysteine 190–cysteine 196, cysteine 246–cysteine 260, cysteine 358–cysteine 615, cysteine 364–cysteine 396, cysteine 374–cysteine 387, cysteine 421–cysteine 693, cysteine 437–cysteine 656, cysteine 469–cysteine 542, cysteine 493–cysteine 684, cysteine 503–cysteine 517, cysteine 514–cysteine 525, cysteine 582–cysteine 596, and cysteine 634–cysteine 639. Positions 139, 143, 145, and 146 each coordinate hydrogencarbonate. Tyrosine 207 lines the Fe(3+) pocket. A Fe(3+)-binding site is contributed by histidine 268. Position 389 is a phosphoserine; by FAM20C (serine 389). Aspartate 411 contacts Fe(3+). Asparagine 432 carries N-linked (GlcNAc...) (complex) asparagine glycosylation. Residue tyrosine 445 participates in Fe(3+) binding. Hydrogencarbonate is bound by residues threonine 471, arginine 475, alanine 477, and glycine 478. N-linked (GlcNAc...) asparagine; atypical; partial glycosylation occurs at asparagine 491. Tyrosine 536 is a binding site for Fe(3+). A Fe(3+)-binding site is contributed by histidine 604. Asparagine 630 carries an N-linked (GlcNAc...) (complex) asparagine glycan. Residue serine 685 is modified to Phosphoserine; by FAM20C.

It belongs to the transferrin family. Monomer. Part of a complex composed of SLC40A1/ferroportin, TF/transferrin and HEPH/hephaestin that transfers iron from cells to transferrin. As to quaternary structure, (Microbial infection) Binds to Neisseria transferrin-binding protein A (tbpA or tbp1). Forms a large complex with TbpA and TbpB. In terms of assembly, (Microbial infection) Binds to Neisseria transferrin-binding protein B (tbpb or tbp2). As to expression, expressed by the liver and secreted in plasma.

The protein localises to the secreted. Its function is as follows. Transferrins are iron binding transport proteins which can bind two Fe(3+) ions in association with the binding of an anion, usually bicarbonate. It is responsible for the transport of iron from sites of absorption and heme degradation to those of storage and utilization. Serum transferrin may also have a further role in stimulating cell proliferation. Functionally, (Microbial infection) Serves as an iron source for Neisseria species, which capture the protein and extract its iron for their own use. In terms of biological role, (Microbial infection) Serves as an iron source for parasite T.brucei (strain 427), which capture TF via its own transferrin receptor ESAG6:ESAG7 and extract its iron for its own use. In Homo sapiens (Human), this protein is Serotransferrin.